The primary structure comprises 629 residues: DNA mismatch repair protein MutL (629 aa).

A disordered region spans residues 376–396 (QYHEKPQQNQPHFSNTPVLPN). Residues 382–396 (QQNQPHFSNTPVLPN) show a composition bias toward polar residues.

This sequence belongs to the DNA mismatch repair MutL/HexB family.

This protein is involved in the repair of mismatches in DNA. It is required for dam-dependent methyl-directed DNA mismatch repair. May act as a 'molecular matchmaker', a protein that promotes the formation of a stable complex between two or more DNA-binding proteins in an ATP-dependent manner without itself being part of a final effector complex. The polypeptide is DNA mismatch repair protein MutL (Haemophilus influenzae (strain PittEE)).